The sequence spans 279 residues: Dehydrogenase/reductase SDR family member 4 (279 aa).

37-61 (LVTASTDGIGLAIARRLAQDGAHVV) contacts NADP(+). Position 93 is an N6-acetyllysine; alternate (Lys-93). The residue at position 93 (Lys-93) is an N6-succinyllysine; alternate. Ser-170 is a binding site for substrate. The active-site Proton acceptor is the Tyr-183. Lys-187 contributes to the NADP(+) binding site. Lys-217 is modified (N6-acetyllysine; alternate). N6-succinyllysine; alternate is present on Lys-217. At Ser-221 the chain carries Phosphoserine. N6-succinyllysine is present on residues Lys-228 and Lys-235. The Peroxisomal targeting signal signature appears at 277-279 (SRL).

It belongs to the short-chain dehydrogenases/reductases (SDR) family. Homotetramer. Detected in heart, kidney, liver and small intestine. Detected at lower levels in brain, lung, stomach and spleen.

It is found in the peroxisome. It carries out the reaction a secondary alcohol + NADP(+) = a ketone + NADPH + H(+). It catalyses the reaction 3alpha-hydroxy-5beta-pregnan-20-one + NADP(+) = 5beta-pregnan-3,20-dione + NADPH + H(+). The enzyme catalyses 5beta-dihydrotestosterone + NADPH + H(+) = 5beta-androstane-3alpha,17beta-diol + NADP(+). The catalysed reaction is all-trans-retinol + NADP(+) = all-trans-retinal + NADPH + H(+). It carries out the reaction isatin + NADPH + H(+) = 3-hydroxyindolin-2-one + NADP(+). With respect to regulation, inhibited by kaempferol, quercetin, genistein and myristic acid. NADPH-dependent oxidoreductase which catalyzes the reduction of a variety of compounds bearing carbonyl groups including ketosteroids, alpha-dicarbonyl compounds, aldehydes, aromatic ketones and quinones. Reduces all-trans-retinal and 9-cis retinal. Reduces 3-ketosteroids and benzil into 3alpha-hydroxysteroids and S-benzoin, respectively, in contrast to the stereoselectivity of primates DHRS4s which produce 3beta-hydroxysteroids and R-benzoin. In the reverse reaction, catalyzes the NADP-dependent oxidation of 3alpha-hydroxysteroids and alcohol, but with much lower efficiency. Involved in the metabolism of 3alpha-hydroxysteroids, retinoid, isatin and xenobiotic carbonyl compounds. In Sus scrofa (Pig), this protein is Dehydrogenase/reductase SDR family member 4 (DHRS4).